Here is a 355-residue protein sequence, read N- to C-terminus: Meiotic coiled-coil protein 4 (355 aa).

Residues 298 to 338 are a coiled coil; it reads QRLSRTEINKEIIEIEKLELEVVQFQMSIANLINTQVEVTN.

Its subcellular location is the cytoplasm. In terms of biological role, has a role in meiosis. The sequence is that of Meiotic coiled-coil protein 4 (mcp4) from Schizosaccharomyces pombe (strain 972 / ATCC 24843) (Fission yeast).